Reading from the N-terminus, the 575-residue chain is Malto-oligosyltrehalose trehalohydrolase (575 aa).

Residue 248-253 (RLDAVH) participates in substrate binding. The active-site Nucleophile is the Asp250. Catalysis depends on Glu287, which acts as the Proton donor. Substrate-binding positions include 312–316 (DDVHH) and 381–386 (HDQVGN).

Belongs to the glycosyl hydrolase 13 family.

The protein resides in the cytoplasm. It catalyses the reaction hydrolysis of (1-&gt;4)-alpha-D-glucosidic linkage in 4-alpha-D-[(1-&gt;4)-alpha-D-glucanosyl]n trehalose to yield trehalose and (1-&gt;4)-alpha-D-glucan.. The protein operates within glycan biosynthesis; trehalose biosynthesis. This is Malto-oligosyltrehalose trehalohydrolase (treZ) from Arthrobacter ramosus.